The following is a 409-amino-acid chain: Na(+)-translocating NADH-quinone reductase subunit F (409 aa).

A helical membrane pass occupies residues 5-25; that stretch reads FIFGIIAFTALVLVLAVIILF. The 2Fe-2S ferredoxin-type domain occupies 34–128; sequence GDITISINDD…SMDVELPEEI (95 aa). Positions 71, 77, 80, and 112 each coordinate [2Fe-2S] cluster. Residues 131–271 form the FAD-binding FR-type domain; it reads VKKWECTVIS…SGPFGEFFAK (141 aa).

It belongs to the NqrF family. Composed of six subunits; NqrA, NqrB, NqrC, NqrD, NqrE and NqrF. [2Fe-2S] cluster is required as a cofactor. The cofactor is FAD.

The protein localises to the cell inner membrane. It carries out the reaction a ubiquinone + n Na(+)(in) + NADH + H(+) = a ubiquinol + n Na(+)(out) + NAD(+). Functionally, NQR complex catalyzes the reduction of ubiquinone-1 to ubiquinol by two successive reactions, coupled with the transport of Na(+) ions from the cytoplasm to the periplasm. The first step is catalyzed by NqrF, which accepts electrons from NADH and reduces ubiquinone-1 to ubisemiquinone by a one-electron transfer pathway. The chain is Na(+)-translocating NADH-quinone reductase subunit F from Haemophilus ducreyi (strain 35000HP / ATCC 700724).